A 226-amino-acid chain; its full sequence is Ribonuclease 3 (226 aa).

The RNase III domain occupies 7–129 (LPRLCRTLSY…IIGAVYLDSD (123 aa)). E42 is a Mg(2+) binding site. Residue D46 is part of the active site. The Mg(2+) site is built by D115 and E118. E118 is a catalytic residue. The 71-residue stretch at 156 to 226 (DAKTLLQEHL…AAQVLELLKK (71 aa)) folds into the DRBM domain.

Belongs to the ribonuclease III family. Homodimer. Mg(2+) is required as a cofactor.

The protein resides in the cytoplasm. It carries out the reaction Endonucleolytic cleavage to 5'-phosphomonoester.. Its function is as follows. Digests double-stranded RNA. Involved in the processing of primary rRNA transcript to yield the immediate precursors to the large and small rRNAs (23S and 16S). Processes some mRNAs, and tRNAs when they are encoded in the rRNA operon. Processes pre-crRNA and tracrRNA of type II CRISPR loci if present in the organism. In Shewanella baltica (strain OS223), this protein is Ribonuclease 3.